The primary structure comprises 445 residues: Phosphoglucosamine mutase (445 aa).

The active-site Phosphoserine intermediate is the serine 102. Residues serine 102, aspartate 241, aspartate 243, and aspartate 245 each coordinate Mg(2+). Serine 102 carries the post-translational modification Phosphoserine.

The protein belongs to the phosphohexose mutase family. The cofactor is Mg(2+). Post-translationally, activated by phosphorylation.

It catalyses the reaction alpha-D-glucosamine 1-phosphate = D-glucosamine 6-phosphate. In terms of biological role, catalyzes the conversion of glucosamine-6-phosphate to glucosamine-1-phosphate. This Shewanella piezotolerans (strain WP3 / JCM 13877) protein is Phosphoglucosamine mutase.